Reading from the N-terminus, the 272-residue chain is MSSANNISGAPETGDFTFTQHFNVSATPSEFLASIWPYRHMMWIGPMLLFLAPRFYNTLKNTAFSRAYHMPYSILALHVFISFVDLANYHTQVFLANGAIHPASQIDALICIVQCWTSLYITAQHHLLPKIAMEVTRATFHCMSVQRLFATAMAIRTGDPRWHEASIMLLNNFIWARLLIAYCKMGRFSWKQRYGVGIVGSHLLGMWNGTYPHGIAIYCGLMVVLLNIDGWAKGRDSSVARALRYLGLATPADWYIKVGIDPPTKSAEKKEA.

Asn-6 and Asn-23 each carry an N-linked (GlcNAc...) asparagine glycan. Transmembrane regions (helical) follow at residues 31–51 and 67–87; these read FLASIWPYRHMMWIGPMLLFL and AYHMPYSILALHVFISFVDLA. Asn-208 carries N-linked (GlcNAc...) asparagine glycosylation.

It is found in the membrane. The protein operates within antibiotic biosynthesis. Its function is as follows. Part of the gene cluster that mediates the biosynthesis of sordarin and hypoxysordarin, glycoside antibiotics with a unique tetracyclic diterpene aglycone structure. First, the geranylgeranyl diphosphate synthase sdnC constructs GGDP from farnesyl diphosphate and isopentenyl diphosphate. The diterpene cyclase sdnA then catalyzes the cyclization of GGDP to afford cycloaraneosene. Cycloaraneosene is then hydroxylated four times by the putative cytochrome P450 monooxygenases sdnB, sdnE, sdnF and sdnH to give a hydroxylated cycloaraneosene derivative such as cycloaraneosene-8,9,13,19-tetraol. Although the order of the hydroxylations is unclear, at least C8, C9 and C13 of the cycloaraneosene skeleton are hydroxylated before the sordaricin formation. Dehydration of the 13-hydroxy group of the hydroxylated cycloaraneosene derivative might be catalyzed by an unassigned hypothetical protein such as sdnG and sdnP to construct the cyclopentadiene moiety. The FAD-dependent oxidoreductase sdnN is proposed to catalyze the oxidation at C9 of the hydroxylated cycloaraneosene derivative and also catalyze the Baeyer-Villiger oxidation to give the lactone intermediate. The presumed lactone intermediate would be hydrolyzed to give an acrolein moiety and a carboxylate moiety. Then, [4+2]cycloaddition would occur between the acrolein moiety and the cyclopentadiene moiety to give sordaricin. SdnN might also be involved in the [4+2]cycloaddition after the hypothesized oxidation to accommodate the oxidized product and prompt the [4+2]cycloaddition. GDP-6-deoxy-D-altrose may be biosynthesized from GDP-D-mannose by the putative GDP-mannose-4,6-dehydratase sdnI and the short-chain dehydrogenase sdnK. The glycosyltransferase sdnJ catalyzes the attachment of 6-deoxy-D-altrose onto the 19-hydroxy group of sordaricin to give 4'-O-demethylsordarin. The methyltransferase sdnD would complete the biosynthesis of sordarin. Sordarin can be further modified into hypoxysordarin. The unique acyl chain at the 3'-hydroxy group of hypoxysordarin would be constructed by an iterative type I PKS sdnO and the trans-acting polyketide methyltransferase sdnL. SdnL would be responsible for the introduction of an alpha-methyl group of the polyketide chain. Alternatively, the beta-lactamase-like protein sdnR might be responsible for the cleavage and transfer of the polyketide chain from the PKS sdnO to sordarin. Two putative cytochrome P450 monooxygenases, sdnQ and sdnT, might catalyze the epoxidations of the polyketide chain to complete the biosynthesis of hypoxysordarin. Transcriptional regulators sdnM and sdnS are presumably encoded for the transcriptional regulation of the expression of the sdn gene cluster. The chain is Sordarin/hypoxysordarin biosynthesis cluster protein P from Sordaria araneosa (Pleurage araneosa).